The sequence spans 199 residues: 3-isopropylmalate dehydratase small subunit (199 aa).

This sequence belongs to the LeuD family. LeuD type 1 subfamily. Heterodimer of LeuC and LeuD.

It catalyses the reaction (2R,3S)-3-isopropylmalate = (2S)-2-isopropylmalate. The protein operates within amino-acid biosynthesis; L-leucine biosynthesis; L-leucine from 3-methyl-2-oxobutanoate: step 2/4. Catalyzes the isomerization between 2-isopropylmalate and 3-isopropylmalate, via the formation of 2-isopropylmaleate. The polypeptide is 3-isopropylmalate dehydratase small subunit (Bacillus pumilus (strain SAFR-032)).